The chain runs to 156 residues: Ribosome-binding factor A (156 aa).

The interval 124-156 (TRAEYAGEAQPYRLEEEPEGSGDEVPPPGGDQR) is disordered.

The protein belongs to the RbfA family. In terms of assembly, monomer. Binds 30S ribosomal subunits, but not 50S ribosomal subunits or 70S ribosomes.

It localises to the cytoplasm. Its function is as follows. One of several proteins that assist in the late maturation steps of the functional core of the 30S ribosomal subunit. Associates with free 30S ribosomal subunits (but not with 30S subunits that are part of 70S ribosomes or polysomes). Required for efficient processing of 16S rRNA. May interact with the 5'-terminal helix region of 16S rRNA. This chain is Ribosome-binding factor A, found in Salinispora tropica (strain ATCC BAA-916 / DSM 44818 / JCM 13857 / NBRC 105044 / CNB-440).